Reading from the N-terminus, the 396-residue chain is Ribosomal RNA large subunit methyltransferase I (396 aa).

The PUA domain maps to 2 to 79 (AIRIKLKPGR…REEEIDREFF (78 aa)).

The protein belongs to the methyltransferase superfamily. RlmI family.

It localises to the cytoplasm. The catalysed reaction is cytidine(1962) in 23S rRNA + S-adenosyl-L-methionine = 5-methylcytidine(1962) in 23S rRNA + S-adenosyl-L-homocysteine + H(+). Specifically methylates the cytosine at position 1962 (m5C1962) of 23S rRNA. The protein is Ribosomal RNA large subunit methyltransferase I of Shewanella baltica (strain OS155 / ATCC BAA-1091).